The primary structure comprises 219 residues: ATP-dependent dethiobiotin synthetase BioD (219 aa).

12 to 17 (DLGKTH) contacts ATP. A Mg(2+)-binding site is contributed by T16. K37 is a catalytic residue. S41 serves as a coordination point for substrate. ATP contacts are provided by residues D52, 115–118 (EGAG), and 175–176 (SE). Positions 52 and 115 each coordinate Mg(2+).

This sequence belongs to the dethiobiotin synthetase family. In terms of assembly, homodimer. Mg(2+) is required as a cofactor.

It localises to the cytoplasm. It catalyses the reaction (7R,8S)-7,8-diammoniononanoate + CO2 + ATP = (4R,5S)-dethiobiotin + ADP + phosphate + 3 H(+). It functions in the pathway cofactor biosynthesis; biotin biosynthesis; biotin from 7,8-diaminononanoate: step 1/2. Catalyzes a mechanistically unusual reaction, the ATP-dependent insertion of CO2 between the N7 and N8 nitrogen atoms of 7,8-diaminopelargonic acid (DAPA, also called 7,8-diammoniononanoate) to form a ureido ring. In Caulobacter vibrioides (strain ATCC 19089 / CIP 103742 / CB 15) (Caulobacter crescentus), this protein is ATP-dependent dethiobiotin synthetase BioD.